A 194-amino-acid chain; its full sequence is dCTP deaminase (194 aa).

Residues 110 to 115, D128, 136 to 138, Y171, K178, and Q182 contribute to the dCTP site; these read RSSLAR and VLE. The active-site Proton donor/acceptor is the E138.

This sequence belongs to the dCTP deaminase family. In terms of assembly, homotrimer.

The catalysed reaction is dCTP + H2O + H(+) = dUTP + NH4(+). Its pathway is pyrimidine metabolism; dUMP biosynthesis; dUMP from dCTP (dUTP route): step 1/2. Functionally, catalyzes the deamination of dCTP to dUTP. In Pseudoalteromonas translucida (strain TAC 125), this protein is dCTP deaminase.